The sequence spans 156 residues: Small ribosomal subunit protein uS7 (156 aa).

Belongs to the universal ribosomal protein uS7 family. Part of the 30S ribosomal subunit. Contacts proteins S9 and S11.

Its function is as follows. One of the primary rRNA binding proteins, it binds directly to 16S rRNA where it nucleates assembly of the head domain of the 30S subunit. Is located at the subunit interface close to the decoding center, probably blocks exit of the E-site tRNA. The sequence is that of Small ribosomal subunit protein uS7 from Janthinobacterium sp. (strain Marseille) (Minibacterium massiliensis).